Here is a 226-residue protein sequence, read N- to C-terminus: Ribonuclease 3 (226 aa).

The 123-residue stretch at 5-127 (IFQRGDPIGH…IVAAIYLDCG (123 aa)) folds into the RNase III domain. A Mg(2+)-binding site is contributed by glutamate 40. Aspartate 44 is a catalytic residue. Residues aspartate 113 and glutamate 116 each coordinate Mg(2+). Residue glutamate 116 is part of the active site. The DRBM domain occupies 154 to 224 (DPKTRLQEWL…ATLVIAQLDS (71 aa)).

The protein belongs to the ribonuclease III family. Homodimer. Requires Mg(2+) as cofactor.

The protein resides in the cytoplasm. It carries out the reaction Endonucleolytic cleavage to 5'-phosphomonoester.. Functionally, digests double-stranded RNA. Involved in the processing of primary rRNA transcript to yield the immediate precursors to the large and small rRNAs (23S and 16S). Processes some mRNAs, and tRNAs when they are encoded in the rRNA operon. Processes pre-crRNA and tracrRNA of type II CRISPR loci if present in the organism. The protein is Ribonuclease 3 of Xanthomonas oryzae pv. oryzae (strain KACC10331 / KXO85).